Here is a 97-residue protein sequence, read N- to C-terminus: Scorpine-like peptide Ev37 (97 aa).

Positions 1–19 are cleaved as a signal peptide; it reads MNSKLTVIVLLALITIASC. Positions 55-95 constitute a BetaSPN-type CS-alpha/beta domain; sequence QNLCAFNVDTVGMCDADCKRQGKAKGVCHGTKCKCDVELSY. Intrachain disulfides connect Cys58-Cys82, Cys68-Cys87, and Cys72-Cys89.

Belongs to the long chain scorpion toxin family. Class 3 subfamily. In terms of tissue distribution, expressed by the venom gland.

Its subcellular location is the secreted. In terms of biological role, selectively inhibits Kv1.3/KCNA3 channel (IC(50)=0.95 uM). Both N-terminal and C-terminal domains are likely involved in the interaction with Kv1.3/KCNA3, since neither its N-terminal domain (1-36) nor its C-terminal domain (37-78) block Kv1.3/KCNA3 channel. This chain is Scorpine-like peptide Ev37, found in Euscorpiops validus (Scorpion).